A 98-amino-acid chain; its full sequence is Large ribosomal subunit protein eL30 (98 aa).

It belongs to the eukaryotic ribosomal protein eL30 family.

The protein is Large ribosomal subunit protein eL30 (rpl30e) of Methanothermobacter thermautotrophicus (strain ATCC 29096 / DSM 1053 / JCM 10044 / NBRC 100330 / Delta H) (Methanobacterium thermoautotrophicum).